The primary structure comprises 277 residues: 2-dehydro-3-deoxyphosphooctonate aldolase (277 aa).

The protein belongs to the KdsA family.

It is found in the cytoplasm. It catalyses the reaction D-arabinose 5-phosphate + phosphoenolpyruvate + H2O = 3-deoxy-alpha-D-manno-2-octulosonate-8-phosphate + phosphate. It participates in carbohydrate biosynthesis; 3-deoxy-D-manno-octulosonate biosynthesis; 3-deoxy-D-manno-octulosonate from D-ribulose 5-phosphate: step 2/3. The protein operates within bacterial outer membrane biogenesis; lipopolysaccharide biosynthesis. The chain is 2-dehydro-3-deoxyphosphooctonate aldolase from Syntrophotalea carbinolica (strain DSM 2380 / NBRC 103641 / GraBd1) (Pelobacter carbinolicus).